A 340-amino-acid chain; its full sequence is Sodium/bile acid cotransporter 7 (340 aa).

Topologically, residues 1–10 are cytoplasmic; the sequence is MRLLERARKE. A helical transmembrane segment spans residues 11–31; it reads WFMVGIVVAIGAAKLEPSVGV. At 32 to 37 the chain is on the extracellular side; it reads NGGPLK. Residues 38–58 form a helical membrane-spanning segment; sequence PEITVSYIAVATIFFNSGLSL. The Cytoplasmic segment spans residues 59 to 71; that stretch reads KTEELTSALVHLR. The chain crosses the membrane as a helical span at residues 72–92; it reads LHLFIQIFTLAFFPAAIWLFL. The Extracellular portion of the chain corresponds to 93-116; sequence QLLSVTSINEWLLKGLQTVGCMPP. The helical transmembrane segment at 117–137 threads the bilayer; sequence PVSSAVILTKAVGGNEAAAIF. Residue Asn-138 is a topological domain, cytoplasmic. A helical membrane pass occupies residues 139 to 159; sequence SAFGSFLGIVVTPVLLLLFLG. Residues 160–163 lie on the Extracellular side of the membrane; it reads SSSS. The chain crosses the membrane as a helical span at residues 164–184; the sequence is VPFTSIFSQLFMTVVVPLVIG. The Cytoplasmic portion of the chain corresponds to 185 to 201; it reads QIVRRYIKDWLERKKPP. A helical membrane pass occupies residues 202–222; it reads FGVVSSSVLLMIIYTTFCDTF. At 223-234 the chain is on the extracellular side; sequence SNPNIDLDKFSL. A helical transmembrane segment spans residues 235–255; the sequence is ILILFIIVSVQLSFMLLTFIF. The Cytoplasmic segment spans residues 256–270; sequence STRNNSGFTPADTVA. Residues 271 to 291 traverse the membrane as a helical segment; sequence IIFCSTHKSLTLGIPMLKIVF. Residues 292 to 298 lie on the Extracellular side of the membrane; that stretch reads AGHEHLS. The helical transmembrane segment at 299–319 threads the bilayer; that stretch reads LISVPLLIYHPAQILLGSVLV. At 320-340 the chain is on the cytoplasmic side; sequence PTIKSWMVSRQKGVKLTRPTV.

This sequence belongs to the bile acid:sodium symporter (BASS) (TC 2.A.28) family. Expressed in heart, brain, colon, lung, liver, adrenal gland, stomach and ovary. Also expressed weakly in small intestine. Expressed in skeletal tissues.

The protein resides in the cell membrane. It localises to the endoplasmic reticulum membrane. It is found in the golgi apparatus membrane. Functionally, involved in teeth and skeletal development. Has an essential role in the biosynthesis and trafficking of glycosaminoglycans and glycoproteins to produce a proper functioning extracellular matrix. Required for extracellular matrix mineralization. Also involved in the regulation of cellular calcium homeostasis. Does not show transport activity towards bile acids or steroid sulfates (including taurocholate, cholate, chenodeoxycholate, estrone-3-sulfate, dehydroepiandrosterone sulfate (DHEAS) and pregnenolone sulfate). The protein is Sodium/bile acid cotransporter 7 (Slc10a7) of Mus musculus (Mouse).